Consider the following 828-residue polypeptide: Periplasmic nitrate reductase (828 aa).

A signal peptide (tat-type signal) is located at residues 1–32 (MNLSRRDFMKTNAAVAAAAVAGLAIPVKNVEA). One can recognise a 4Fe-4S Mo/W bis-MGD-type domain in the interval 38 to 94 (IKWDKAPCRFCGTGCSVLVGTQNGRVVASQGDPDADVNRGLNCIKGYFLPKIMYGKD). Residues Cys45, Cys48, Cys52, and Cys80 each coordinate [4Fe-4S] cluster. Mo-bis(molybdopterin guanine dinucleotide)-binding positions include Lys82, Gln149, Asn174, Cys178, 211–218 (WGSNMAEM), 242–246 (STFEH), 261–263 (QSD), Met372, Gln376, Asn482, 508–509 (SD), Lys531, Asp558, and 718–727 (TGRVLEHWHT). Phe794 lines the substrate pocket. The Mo-bis(molybdopterin guanine dinucleotide) site is built by Asn802 and Lys819.

It belongs to the prokaryotic molybdopterin-containing oxidoreductase family. NasA/NapA/NarB subfamily. As to quaternary structure, component of the periplasmic nitrate reductase NapAB complex composed of NapA and NapB. The cofactor is [4Fe-4S] cluster. It depends on Mo-bis(molybdopterin guanine dinucleotide) as a cofactor. Predicted to be exported by the Tat system. The position of the signal peptide cleavage has not been experimentally proven.

The protein resides in the periplasm. The enzyme catalyses 2 Fe(II)-[cytochrome] + nitrate + 2 H(+) = 2 Fe(III)-[cytochrome] + nitrite + H2O. Catalytic subunit of the periplasmic nitrate reductase complex NapAB. Receives electrons from NapB and catalyzes the reduction of nitrate to nitrite. This Pasteurella multocida (strain Pm70) protein is Periplasmic nitrate reductase.